The following is a 320-amino-acid chain: Cytochrome f (320 aa).

The signal sequence occupies residues 1 to 35; that stretch reads MENRNTFSWVKEQITRSISVSIMIYVITRTSISNA. Heme-binding residues include Y36, C56, C59, and H60. The helical transmembrane segment at 286–306 threads the bilayer; it reads VQGLLFFFASVILAQVFLVLK.

This sequence belongs to the cytochrome f family. In terms of assembly, the 4 large subunits of the cytochrome b6-f complex are cytochrome b6, subunit IV (17 kDa polypeptide, petD), cytochrome f and the Rieske protein, while the 4 small subunits are PetG, PetL, PetM and PetN. The complex functions as a dimer. Heme serves as cofactor.

The protein localises to the plastid. The protein resides in the chloroplast thylakoid membrane. Functionally, component of the cytochrome b6-f complex, which mediates electron transfer between photosystem II (PSII) and photosystem I (PSI), cyclic electron flow around PSI, and state transitions. This chain is Cytochrome f, found in Hordeum vulgare (Barley).